An 889-amino-acid polypeptide reads, in one-letter code: Alanine--tRNA ligase (889 aa).

4 residues coordinate Zn(2+): His574, His578, Cys676, and His680.

Belongs to the class-II aminoacyl-tRNA synthetase family. Requires Zn(2+) as cofactor.

It is found in the cytoplasm. It catalyses the reaction tRNA(Ala) + L-alanine + ATP = L-alanyl-tRNA(Ala) + AMP + diphosphate. Its function is as follows. Catalyzes the attachment of alanine to tRNA(Ala) in a two-step reaction: alanine is first activated by ATP to form Ala-AMP and then transferred to the acceptor end of tRNA(Ala). Also edits incorrectly charged Ser-tRNA(Ala) and Gly-tRNA(Ala) via its editing domain. The sequence is that of Alanine--tRNA ligase from Thermobifida fusca (strain YX).